A 175-amino-acid chain; its full sequence is Large ribosomal subunit protein uL10 (175 aa).

The protein belongs to the universal ribosomal protein uL10 family. Part of the ribosomal stalk of the 50S ribosomal subunit. The N-terminus interacts with L11 and the large rRNA to form the base of the stalk. The C-terminus forms an elongated spine to which L12 dimers bind in a sequential fashion forming a multimeric L10(L12)X complex.

Its function is as follows. Forms part of the ribosomal stalk, playing a central role in the interaction of the ribosome with GTP-bound translation factors. This is Large ribosomal subunit protein uL10 from Psychrobacter cryohalolentis (strain ATCC BAA-1226 / DSM 17306 / VKM B-2378 / K5).